Here is a 1657-residue protein sequence, read N- to C-terminus: Endoribonuclease Dicer homolog 4 (1657 aa).

A compositionally biased stretch (low complexity) spans 1 to 14; it reads MGDAAAAAPAAAAA. The segment at 1 to 26 is disordered; sequence MGDAAAAAPAAAAAGPSSTRGEPKDP. The region spanning 37–214 is the Helicase ATP-binding domain; it reads LCKRAVEENI…SHSFTEKGGR (178 aa). 50–57 is an ATP binding site; it reads LGTGCGKT. Positions 157–160 match the DECH box motif; it reads DECH. The Helicase C-terminal domain maps to 400–567; the sequence is NKFSVLINVL…TSNDMFDCLE (168 aa). The region spanning 585 to 675 is the Dicer dsRNA-binding fold domain; that stretch reads SVSLLHCYCD…LPGPGSRKNK (91 aa). The PAZ domain maps to 856–978; the sequence is DVSVHASYSS…LPPELCSLKV (123 aa). RNase III domains lie at 1010–1173 and 1214–1358; these read DVML…VEGG and IAGL…LDSG. Mg(2+) is bound by residues Glu-1252, Asp-1344, and Glu-1347. Residues 1384 to 1451 form the DRBM 1 domain; it reads NPMRELRELC…AQETLSKLKN (68 aa). Positions 1525-1556 are disordered; sequence GSGKHDVNNGRNNQPKLATQSGRLPSEATEKS. Over residues 1533–1547 the composition is skewed to polar residues; the sequence is NGRNNQPKLATQSGR. One can recognise a DRBM 2 domain in the interval 1569–1645; that stretch reads TARSFLFELC…AQGALWCLKQ (77 aa).

It belongs to the helicase family. Dicer subfamily. In terms of assembly, may interact with ARGONAUTE1 or PINHEAD through their common PAZ domains. Mg(2+) serves as cofactor. It depends on Mn(2+) as a cofactor. Expressed in roots, leaf blades, leaf sheaths, shoot apices and spikelets.

It localises to the nucleus. In terms of biological role, involved in the RNA silencing pathway. Cleaves double-stranded RNA to produce small interfering RNAs (siRNAs) which target the selective destruction of complementary RNAs. Required for the production of 21 nucleotide siRNAs. Regulates shoot apical meristem (SAM) initiation and maintenance, leaf polarization and lemma polarity through the trans-acting siRNAS (ta-siRNAs) pathway, which probably modulate the expression of the ARF2, ARF3, ARF4, ARF14 and ARF15 genes. Can process endogenous 21 nucleotide siRNAs derived from an imperfect inverted repeat. May not be involved in microRNAs (miRNAs) production. This chain is Endoribonuclease Dicer homolog 4 (DCL4), found in Oryza sativa subsp. japonica (Rice).